A 932-amino-acid chain; its full sequence is Protocadherin gamma-A3 (932 aa).

An N-terminal signal peptide occupies residues 1 to 29 (MTNCLSFRNGRGLALLCALLGTLCETGSG). 6 Cadherin domains span residues 30-133 (QIRY…APNF), 134-242 (PTEE…PPMF), 243-347 (TQPE…APEI), 348-452 (TITS…PPTF), 453-562 (PHLS…APEI), and 570-682 (DGST…EPSA). The Extracellular portion of the chain corresponds to 30–692 (QIRYSVSEEL…KPNDSDLTLY (663 aa)). 3 N-linked (GlcNAc...) asparagine glycosylation sites follow: N265, N419, and N545. Residue N685 is glycosylated (N-linked (GlcNAc...) asparagine). Residues 693–713 (LVVAVAAVSCVFLALVIVLLA) traverse the membrane as a helical segment. The Cytoplasmic segment spans residues 714-932 (HRLRRWHKSR…KKKSGKKEKK (219 aa)). Disordered regions lie at residues 806 to 841 (LLQQ…WPNN) and 902 to 932 (ATLT…KEKK). The span at 922–932 (NKKKSGKKEKK) shows a compositional bias: basic residues.

Its subcellular location is the cell membrane. Functionally, potential calcium-dependent cell-adhesion protein. May be involved in the establishment and maintenance of specific neuronal connections in the brain. The polypeptide is Protocadherin gamma-A3 (PCDHGA3) (Pan troglodytes (Chimpanzee)).